The chain runs to 319 residues: 7,8-didemethyl-8-hydroxy-5-deazariboflavin synthase (319 aa).

Residues 5-236 (VTYSPAYTIV…SNITLQIPPN (232 aa)) enclose the Radical SAM core domain. [4Fe-4S] cluster contacts are provided by C19, C23, and C26.

This sequence belongs to the radical SAM superfamily. CofG family. As to quaternary structure, consists of two subunits, CofG and CofH. [4Fe-4S] cluster is required as a cofactor.

It carries out the reaction 5-amino-5-(4-hydroxybenzyl)-6-(D-ribitylimino)-5,6-dihydrouracil + S-adenosyl-L-methionine = 7,8-didemethyl-8-hydroxy-5-deazariboflavin + 5'-deoxyadenosine + L-methionine + NH4(+) + H(+). Its pathway is cofactor biosynthesis; coenzyme F0 biosynthesis. Its function is as follows. Catalyzes the radical-mediated synthesis of 7,8-didemethyl-8-hydroxy-5-deazariboflavin from 5-amino-5-(4-hydroxybenzyl)-6-(D-ribitylimino)-5,6-dihydrouracil. The sequence is that of 7,8-didemethyl-8-hydroxy-5-deazariboflavin synthase from Trichodesmium erythraeum (strain IMS101).